We begin with the raw amino-acid sequence, 387 residues long: MAAAALLWLPLLVGCLAGPGGTEAQQTTLYPLVGRVFVHTLEPASFLHLPEHAAPATIPVTYHAHLQGHPDLPRWLRYTQRSPHHPGFLYGAATPEDRGRQVIEVTAYNRDSFDTAGQSLVLLIRDPEGSPLPYQTEFLVRSHDVEEVLPPTPASHFLTALAGLWEPGELKLLNITSALDRGGRVPLPIGGQKEGVYIKVGSASPFSTCLKMVASPDSHARCARGQPPLLSCYDTLAPHFRVDWCNVSLVDTSVPEPVDEVPTPGDGILEHDPFFCPPTEATARDFLADALVTLLVPLLVALLLALLLAYIMCCRREGRLKRDLATSDIQMVHHCTIHENTEELRQMAASREVPRPLFPLPMFNVRTGERMPPRVDSAQVPLILDQH.

The first 24 residues, 1–24 (MAAAALLWLPLLVGCLAGPGGTEA), serve as a signal peptide directing secretion. Topologically, residues 25-290 (QQTTLYPLVG…ATARDFLADA (266 aa)) are extracellular. N-linked (GlcNAc...) asparagine glycans are attached at residues Asn174 and Asn246. A helical transmembrane segment spans residues 291–311 (LVTLLVPLLVALLLALLLAYI). Residues 312-387 (MCCRREGRLK…AQVPLILDQH (76 aa)) are Cytoplasmic-facing. Ser377 is modified (phosphoserine).

This sequence belongs to the sarcoglycan alpha/epsilon family. In terms of assembly, cross-link to form 2 major subcomplexes: one consisting of SGCB, SGCD and SGCG and the other consisting of SGCB and SGCD. The association between SGCB and SGCG is particularly strong while SGCA is loosely associated with the other sarcoglycans. Interacts with the syntrophin SNTA1.

Its subcellular location is the cell membrane. It is found in the sarcolemma. The protein resides in the cytoplasm. It localises to the cytoskeleton. Functionally, component of the sarcoglycan complex, a subcomplex of the dystrophin-glycoprotein complex which forms a link between the F-actin cytoskeleton and the extracellular matrix. The sequence is that of Alpha-sarcoglycan (SGCA) from Oryctolagus cuniculus (Rabbit).